The chain runs to 364 residues: NAD(P)H-quinone oxidoreductase subunit 1, chloroplastic (364 aa).

Transmembrane regions (helical) follow at residues 27 to 47 (IWLLVPIFTPVSGILIGVLVI), 98 to 118 (FSVGPSIAVISILLSYSVIPF), 127 to 147 (ISIGVFLWIAISSIAPIGLLM), 255 to 275 (GLFYVASYLNLLVSSLFVTVL), 301 to 321 (VFGSTIGILITLAKAYLFLFV), and 337 to 357 (LLNLGWKFLLPIALGNLLLTT).

The protein belongs to the complex I subunit 1 family. In terms of assembly, NDH is composed of at least 16 different subunits, 5 of which are encoded in the nucleus.

It localises to the plastid. The protein localises to the chloroplast thylakoid membrane. The enzyme catalyses a plastoquinone + NADH + (n+1) H(+)(in) = a plastoquinol + NAD(+) + n H(+)(out). It carries out the reaction a plastoquinone + NADPH + (n+1) H(+)(in) = a plastoquinol + NADP(+) + n H(+)(out). NDH shuttles electrons from NAD(P)H:plastoquinone, via FMN and iron-sulfur (Fe-S) centers, to quinones in the photosynthetic chain and possibly in a chloroplast respiratory chain. The immediate electron acceptor for the enzyme in this species is believed to be plastoquinone. Couples the redox reaction to proton translocation, and thus conserves the redox energy in a proton gradient. The chain is NAD(P)H-quinone oxidoreductase subunit 1, chloroplastic from Illicium oligandrum (Star anise).